The sequence spans 201 residues: Peptidyl-prolyl cis-trans isomerase FKBP11 (201 aa).

Positions 1–27 are cleaved as a signal peptide; it reads MTLRPSLLPLHLLLLLLLSAAVCRAEA. One can recognise a PPIase FKBP-type domain in the interval 57-144; it reads GDTLHIHYTG…QYDVELIALI (88 aa). The chain crosses the membrane as a helical span at residues 156–176; that stretch reads ILPLVGMAMVPALLGLIGYHL.

Belongs to the FKBP-type PPIase family. Interacts with IFITM5.

It is found in the membrane. The catalysed reaction is [protein]-peptidylproline (omega=180) = [protein]-peptidylproline (omega=0). In terms of biological role, PPIases accelerate the folding of proteins during protein synthesis. The polypeptide is Peptidyl-prolyl cis-trans isomerase FKBP11 (FKBP11) (Homo sapiens (Human)).